The primary structure comprises 406 residues: Elongation factor Tu-A (406 aa).

In terms of domain architecture, tr-type G spans 10–215 (KPHVNVGTIG…AIDEYIPTPV (206 aa)). A G1 region spans residues 19-26 (GHVDHGKT). 19 to 26 (GHVDHGKT) is a GTP binding site. Thr26 contacts Mg(2+). Residues 61-65 (GITIN) form a G2 region. Residues 82 to 85 (DCPG) form a G3 region. GTP is bound by residues 82-86 (DCPGH) and 137-140 (NKVD). Residues 137-140 (NKVD) are G4. The tract at residues 175-177 (SAL) is G5. Thr395 carries the post-translational modification Phosphothreonine.

This sequence belongs to the TRAFAC class translation factor GTPase superfamily. Classic translation factor GTPase family. EF-Tu/EF-1A subfamily. Monomer. Binds to the 70S ribosome, contacts tmRNA during trans-translation. Phosphorylated on a threonine.

It localises to the cytoplasm. The catalysed reaction is GTP + H2O = GDP + phosphate + H(+). Functionally, GTP hydrolase that promotes the GTP-dependent binding of aminoacyl-tRNA to the A-site of ribosomes during protein biosynthesis. Its function is as follows. EF-Tu-GDP binds to the acceptor arm of tmRNA by interacting with its acceptor arm, suggesting that GTP hydrolysis by EF-Tu is essential for tmRNA function. In terms of biological role, protects glycyl-tRNA(Gly) from hydrolysis by E.coli D-aminoacyl-tRNA deacylase (dtd). This chain is Elongation factor Tu-A, found in Thermus thermophilus (strain ATCC 27634 / DSM 579 / HB8).